The following is a 474-amino-acid chain: PTS system MurNAc-GlcNAc-specific EIIBC component (474 aa).

Positions 5–87 (ERLAKDITHA…ADQSGATLAE (83 aa)) constitute a PTS EIIB type-1 domain. Catalysis depends on C27, which acts as the Phosphocysteine intermediate; for EIIB activity. The 351-residue stretch at 124-474 (KSIANIFIPL…GTTKEMRNPE (351 aa)) folds into the PTS EIIC type-1 domain. The next 10 membrane-spanning stretches (helical) occupy residues 129-149 (IFIP…IAAI), 167-187 (IVTV…IFTG), 193-213 (VFGA…LTGI), 228-248 (LAAG…LSMV), 268-288 (ITLL…AGFV), 299-319 (IIGV…LPLV), 343-363 (LLPI…ALWV), 378-398 (ALPV…TLPL), 402-422 (FFTA…IGHI), and 444-464 (LGYI…TYFF).

Its subcellular location is the cell membrane. The catalysed reaction is N-acetyl-beta-D-muramate-(1-&gt;4)-N-acetyl-D-glucosamine(out) + N(pros)-phospho-L-histidyl-[protein] = 6-phospho-N-acetyl-beta-D-muramate-(1-&gt;4)-N-acetyl-D-glucosamine(in) + L-histidyl-[protein]. It functions in the pathway cell wall biogenesis; peptidoglycan recycling. The phosphoenolpyruvate-dependent sugar phosphotransferase system (sugar PTS), a major carbohydrate active transport system, catalyzes the phosphorylation of incoming sugar substrates concomitantly with their translocation across the cell membrane. This system is involved in the uptake and phosphorylation of MurNAc-GlcNAc, the principle peptidoglycan turnover product of S.aureus, yielding cytoplasmic MurNAc 6P-GlcNAc. The chain is PTS system MurNAc-GlcNAc-specific EIIBC component from Staphylococcus epidermidis (strain ATCC 35984 / DSM 28319 / BCRC 17069 / CCUG 31568 / BM 3577 / RP62A).